A 585-amino-acid chain; its full sequence is Arginine--tRNA ligase (585 aa).

The short motif at 131–141 is the 'HIGH' region element; that stretch reads ANPTGPMHVGH.

This sequence belongs to the class-I aminoacyl-tRNA synthetase family. As to quaternary structure, monomer.

It is found in the cytoplasm. It carries out the reaction tRNA(Arg) + L-arginine + ATP = L-arginyl-tRNA(Arg) + AMP + diphosphate. This is Arginine--tRNA ligase from Brucella melitensis biotype 1 (strain ATCC 23456 / CCUG 17765 / NCTC 10094 / 16M).